The sequence spans 156 residues: 6,7-dimethyl-8-ribityllumazine synthase (156 aa).

5-amino-6-(D-ribitylamino)uracil is bound by residues Phe22, 57 to 59, and 81 to 83; these read AYE and TVI. 86–87 provides a ligand contact to (2S)-2-hydroxy-3-oxobutyl phosphate; it reads GT. Catalysis depends on His89, which acts as the Proton donor. Phe114 provides a ligand contact to 5-amino-6-(D-ribitylamino)uracil. Arg128 is a (2S)-2-hydroxy-3-oxobutyl phosphate binding site.

This sequence belongs to the DMRL synthase family. In terms of assembly, forms an icosahedral capsid composed of 60 subunits, arranged as a dodecamer of pentamers.

It carries out the reaction (2S)-2-hydroxy-3-oxobutyl phosphate + 5-amino-6-(D-ribitylamino)uracil = 6,7-dimethyl-8-(1-D-ribityl)lumazine + phosphate + 2 H2O + H(+). It participates in cofactor biosynthesis; riboflavin biosynthesis; riboflavin from 2-hydroxy-3-oxobutyl phosphate and 5-amino-6-(D-ribitylamino)uracil: step 1/2. Catalyzes the formation of 6,7-dimethyl-8-ribityllumazine by condensation of 5-amino-6-(D-ribitylamino)uracil with 3,4-dihydroxy-2-butanone 4-phosphate. This is the penultimate step in the biosynthesis of riboflavin. In Citrobacter koseri (strain ATCC BAA-895 / CDC 4225-83 / SGSC4696), this protein is 6,7-dimethyl-8-ribityllumazine synthase.